An 82-amino-acid chain; its full sequence is uncharacterized protein (82 aa).

Residues 1-82 (MKIHLIRHNT…HVESDIEIDL (82 aa)) enclose the 2Fe-2S ferredoxin-type domain. The [2Fe-2S] cluster site is built by Cys35, Cys40, Cys43, and Cys72.

The cofactor is [2Fe-2S] cluster.

This is an uncharacterized protein from Haemophilus influenzae (strain ATCC 51907 / DSM 11121 / KW20 / Rd).